The following is a 734-amino-acid chain: Myb-like protein J (734 aa).

3 disordered regions span residues 1 to 35 (MPNNQQNQIESPSKNTSNVGGSTLLNNNSPPFKSN), 128 to 196 (QKDQ…PTMM), and 221 to 378 (SPIS…LKQG). Residues 131-142 (QQQKEQQKEQQK) show a composition bias toward basic and acidic residues. Residues 164-173 (TTTTTTTTTT) are compositionally biased toward low complexity. Positions 174–196 (AVEQQGAEQQDTNLNSTSSPTMM) are enriched in polar residues. Residues 221–230 (SPISSSLNNS) are compositionally biased toward low complexity. The segment covering 231-257 (QDNTKPVSPDNIENTSNPMDTSSSNGK) has biased composition (polar residues). Residues 258-372 (TPTITPIVTP…GGKTNPTGKK (115 aa)) show a composition bias toward low complexity. The HTH myb-type domain occupies 371–426 (KKTSLKQGWTKEEHIRFLNGIQIHGKGAWKEIAQFVGTRTPTQIQSHAQKYYLRQK). The H-T-H motif DNA-binding region spans 399 to 422 (WKEIAQFVGTRTPTQIQSHAQKYY). A compositionally biased stretch (low complexity) spans 445-454 (DDNLNNSNKN). A disordered region spans residues 445 to 623 (DDNLNNSNKN…GNILRHQNSH (179 aa)). Over residues 455–468 (NVDKNKQDDKEKKT) the composition is skewed to basic and acidic residues. Over residues 469–478 (QKTKKTKSKS) the composition is skewed to basic residues. Low complexity-rich tracts occupy residues 489 to 543 (QQQQ…SSQT) and 574 to 615 (NNNN…NEGN).

It localises to the nucleus. This chain is Myb-like protein J (mybJ), found in Dictyostelium discoideum (Social amoeba).